A 174-amino-acid chain; its full sequence is uncharacterized protein (174 aa).

Residues 1–55 are disordered; sequence MGCVVSKSDDIKNENESRQRNQASSSQQPSSSQTPSKQIGIAAKDSEEQPQEVSY. Gly2 carries the N-myristoyl glycine lipid modification. A compositionally biased stretch (basic and acidic residues) spans 7–19; the sequence is KSDDIKNENESRQ. Low complexity predominate over residues 20–38; the sequence is RNQASSSQQPSSSQTPSKQ.

This is an uncharacterized protein from Dictyostelium discoideum (Social amoeba).